The following is a 1060-amino-acid chain: Carbamoyl phosphate synthase large chain (1060 aa).

The tract at residues M1–D400 is carboxyphosphate synthetic domain. R127, R167, G173, G174, Q206, V208, E213, G240, I241, H242, Q283, and E297 together coordinate ATP. The ATP-grasp 1 domain maps to D131 to V326. Q283, E297, and N299 together coordinate Mg(2+). Positions 283, 297, and 299 each coordinate Mn(2+). Residues I401–V539 are oligomerization domain. The tract at residues E540–D926 is carbamoyl phosphate synthetic domain. The ATP-grasp 2 domain maps to T664–M858. The ATP site is built by R700, K739, L741, E746, G771, V772, H773, S774, Q814, and E829. The Mg(2+) site is built by Q814, E829, and N831. Mn(2+) is bound by residues Q814, E829, and N831. The MGS-like domain maps to M925–M1060. The interval L927–M1060 is allosteric domain.

It belongs to the CarB family. Composed of two chains; the small (or glutamine) chain promotes the hydrolysis of glutamine to ammonia, which is used by the large (or ammonia) chain to synthesize carbamoyl phosphate. Tetramer of heterodimers (alpha,beta)4. The cofactor is Mg(2+). It depends on Mn(2+) as a cofactor.

It carries out the reaction hydrogencarbonate + L-glutamine + 2 ATP + H2O = carbamoyl phosphate + L-glutamate + 2 ADP + phosphate + 2 H(+). The enzyme catalyses hydrogencarbonate + NH4(+) + 2 ATP = carbamoyl phosphate + 2 ADP + phosphate + 2 H(+). The protein operates within amino-acid biosynthesis; L-arginine biosynthesis; carbamoyl phosphate from bicarbonate: step 1/1. It participates in pyrimidine metabolism; UMP biosynthesis via de novo pathway; (S)-dihydroorotate from bicarbonate: step 1/3. In terms of biological role, large subunit of the glutamine-dependent carbamoyl phosphate synthetase (CPSase). CPSase catalyzes the formation of carbamoyl phosphate from the ammonia moiety of glutamine, carbonate, and phosphate donated by ATP, constituting the first step of 2 biosynthetic pathways, one leading to arginine and/or urea and the other to pyrimidine nucleotides. The large subunit (synthetase) binds the substrates ammonia (free or transferred from glutamine from the small subunit), hydrogencarbonate and ATP and carries out an ATP-coupled ligase reaction, activating hydrogencarbonate by forming carboxy phosphate which reacts with ammonia to form carbamoyl phosphate. This Methanothermobacter thermautotrophicus (strain ATCC 29096 / DSM 1053 / JCM 10044 / NBRC 100330 / Delta H) (Methanobacterium thermoautotrophicum) protein is Carbamoyl phosphate synthase large chain.